The primary structure comprises 233 residues: Antigenic membrane protein (233 aa).

A signal peptide spans 1–32 (MQNQKNQKSLVAKVLVLFAAVALMFVGVQVFA). The helical transmembrane segment at 206-226 (FLTLVAVVVVAAVAGGVFFFV) threads the bilayer.

The protein resides in the cell membrane. The sequence is that of Antigenic membrane protein (amp) from Onion yellows phytoplasma (strain OY-M).